The primary structure comprises 225 residues: MNSMEFPFLDRTTPNSVISTTLNDLSNWSRLSSLWPLLYGTSCCFIEFASLIGSRFDFDRYGLVPRSSPRQADLILTAGTVTMKMAPSLVRLYEQMPEPKYVIAMGACTITGGMFSTDSYSTVRGVDKLIPVDVYLPGCPPKPEAIIDAITKLRKKVSREIYEDRTESQQENRCFTTNHKFHLGRSTRAVNYDQGLLYQSTSTSEIPSEAFFKYKSSVSSHELVN.

[4Fe-4S] cluster is bound by residues Cys43, Cys44, Cys108, and Cys139.

Belongs to the complex I 20 kDa subunit family. NDH is composed of at least 16 different subunits, 5 of which are encoded in the nucleus. It depends on [4Fe-4S] cluster as a cofactor.

It is found in the plastid. The protein resides in the chloroplast thylakoid membrane. It catalyses the reaction a plastoquinone + NADH + (n+1) H(+)(in) = a plastoquinol + NAD(+) + n H(+)(out). The catalysed reaction is a plastoquinone + NADPH + (n+1) H(+)(in) = a plastoquinol + NADP(+) + n H(+)(out). Its function is as follows. NDH shuttles electrons from NAD(P)H:plastoquinone, via FMN and iron-sulfur (Fe-S) centers, to quinones in the photosynthetic chain and possibly in a chloroplast respiratory chain. The immediate electron acceptor for the enzyme in this species is believed to be plastoquinone. Couples the redox reaction to proton translocation, and thus conserves the redox energy in a proton gradient. The chain is NAD(P)H-quinone oxidoreductase subunit K, chloroplastic from Nuphar advena (Common spatterdock).